Consider the following 274-residue polypeptide: Protein LNK4 (274 aa).

The disordered stretch occupies residues 209–249 (NSQQKSDSNSDEFLEDRTRETEFETKLNRQSRGQSHIQQDG). A compositionally biased stretch (basic and acidic residues) spans 223–235 (EDRTRETEFETKL). Over residues 236–249 (NRQSRGQSHIQQDG) the composition is skewed to polar residues.

As to quaternary structure, interacts with REV8.

Probable transcriptional coactivator. This chain is Protein LNK4, found in Arabidopsis thaliana (Mouse-ear cress).